The chain runs to 380 residues: Cytoplasmic protein NCK2 (380 aa).

Thr2 is modified (N-acetylthreonine). The SH3 1 domain maps to 2–61 (TEEVIVIAKWDYTAQQDQELDIKKNERLWLLDDSKTWWRVRNAANRTGYVPSNYVERKNS). Residues 79 to 102 (KTRRKTSARDASPTPSTDAEYPAN) form a disordered region. Ser90 carries the post-translational modification Phosphoserine. Residue Thr92 is modified to Phosphothreonine. Phosphoserine is present on Ser94. The residue at position 110 (Tyr110) is a Phosphotyrosine. 2 consecutive SH3 domains span residues 111–170 (DLNI…EEVD) and 195–257 (RVLH…VLSD). The SH2 domain occupies 285 to 380 (WYYGNVTRHQ…EKLYLVRALQ (96 aa)).

In terms of assembly, interacts with DOCK1, LIMS1 and TGFB1I1. Part of a complex containing PPP1R15B, PP1 and NCK2. Interacts with FASLG. Interacts with AXL. Interacts with PAK1, PKN2 and SOS1. Interacts (via SH2 domain) with EGFR. Interacts (via SH2 domain) with DDR1. Interacts with IRS1. Phosphorylated. As to expression, ubiquitous.

The protein localises to the cytoplasm. The protein resides in the endoplasmic reticulum. In terms of biological role, adapter protein which associates with tyrosine-phosphorylated growth factor receptors or their cellular substrates. Maintains low levels of EIF2S1 phosphorylation by promoting its dephosphorylation by PP1. Plays a role in ELK1-dependent transcriptional activation in response to activated Ras signaling. The chain is Cytoplasmic protein NCK2 (NCK2) from Homo sapiens (Human).